An 86-amino-acid polypeptide reads, in one-letter code: Precursor of CEP4 (86 aa).

A signal peptide spans 1–30; that stretch reads MVSRGCSITVLFRFLIVLLVIQVHFENTKA. Residues 31–64 constitute a propeptide that is removed on maturation; that stretch reads ARHAPVVSWSPPEPPKDDFVWYHKINRFKNIEQD. Residues 63–86 are disordered; the sequence is QDAFRPTHQGPSQGIGHKNPPGAP. A hydroxyproline mark is found at proline 68 and proline 73. The propeptide occupies 80 to 86; it reads KNPPGAP.

The protein belongs to the C-terminally encoded plant signaling peptide (CEP) family. As to quaternary structure, interacts with CEP receptors (e.g. CEPR1 and CEPR2). The mature small signaling peptide is generated by proteolytic processing of the longer precursor. As to expression, expressed at low levels in flowers. Present in lateral roots, shoot apical meristem (SAM), flowers and siliques.

It is found in the secreted. The protein localises to the extracellular space. It localises to the apoplast. Functionally, extracellular signaling peptide that represses primary root growth rate. Promotes shoot growth and modulates leaf morphology. Regulates systemic nitrogen (N)-demand signaling. Mediates up-regulation of genes involved in N uptake and assimilation pathways. This is Precursor of CEP4 from Arabidopsis thaliana (Mouse-ear cress).